A 315-amino-acid chain; its full sequence is Secreted mono- and diacylglycerol lipase LIP2 (315 aa).

Positions 1-21 (MACFRVILYLSVIFFVQCVFA) are cleaved as a signal peptide. Residues cysteine 68 and cysteine 308 are joined by a disulfide bond. N-linked (GlcNAc...) asparagine glycosylation occurs at asparagine 74. Residue serine 182 is the Nucleophile of the active site. Aspartate 240 is an active-site residue. N-linked (GlcNAc...) asparagine glycosylation occurs at asparagine 265. Histidine 292 is a catalytic residue.

Belongs to the AB hydrolase superfamily. Lipase family. Class 3 subfamily.

It is found in the secreted. The catalysed reaction is a monoacylglycerol + H2O = glycerol + a fatty acid + H(+). It catalyses the reaction a diacylglycerol + H2O = a monoacylglycerol + a fatty acid + H(+). Functionally, secreted lipase involved in Dandruff and seborrheic dermatitis (D/SD) probably via lipase-mediated breakdown of sebaceous lipids and release of irritating free fatty acids. Shows activity against monoglyceride and diglyceride substrates and generates free oleic acid from the substrates mono- and diolein. Able to cleave the oleic acid from both the 1 and the 2 position of the glycerol backbone as 1,2 isomers of diolein were converted into oleic acid and glycerol. Due to an absence of fatty acid synthase genes in Malassezia species, secretory lipases are essential for the yeast to generate free fatty acids from degradation of sebum and assimilate them as lipid sources for growth. Plays an essential role at the pathogen-host interface during disease progression. Also performs the reverse reaction to build diacylglycerols from monoacylglycerols. The protein is Secreted mono- and diacylglycerol lipase LIP2 of Malassezia restricta (Seborrheic dermatitis infection agent).